The following is a 425-amino-acid chain: uncharacterized protein (425 aa).

This is an uncharacterized protein from Salmonella typhimurium (strain LT2 / SGSC1412 / ATCC 700720).